The following is a 175-amino-acid chain: 19.0 kDa class II heat shock protein (175 aa).

A sHSP domain is found at 42-165 (DRRAMANTPM…KPRVVEVKVA (124 aa)). Residues 145-175 (TVDKKPPPEPKKPRVVEVKVAGAGEPKGKGK) are disordered. Positions 146-161 (VDKKPPPEPKKPRVVE) are enriched in basic and acidic residues.

It belongs to the small heat shock protein (HSP20) family. May form oligomeric structures.

The protein resides in the cytoplasm. This chain is 19.0 kDa class II heat shock protein (HSP19.0), found in Oryza sativa subsp. japonica (Rice).